The chain runs to 177 residues: Superoxide dismutase [Cu-Zn] 1 (177 aa).

A signal peptide spans 1–20 (MKYTILSLVAGALISCSAMA). Cu cation-binding residues include histidine 69, histidine 71, and histidine 94. Cysteine 76 and cysteine 172 are joined by a disulfide. 4 residues coordinate Zn(2+): histidine 94, histidine 103, histidine 112, and aspartate 115. Histidine 150 is a Cu cation binding site.

The protein belongs to the Cu-Zn superoxide dismutase family. Monomer. It depends on Cu cation as a cofactor. Zn(2+) serves as cofactor.

The protein resides in the periplasm. The enzyme catalyses 2 superoxide + 2 H(+) = H2O2 + O2. Functionally, destroys radicals which are normally produced within the cells and which are toxic to biological systems. This is Superoxide dismutase [Cu-Zn] 1 (sodC1) from Salmonella typhimurium (strain 4/74).